Reading from the N-terminus, the 213-residue chain is Imidazole glycerol phosphate synthase subunit HisH (213 aa).

The Glutamine amidotransferase type-1 domain maps to 4 to 211 (NLGVIDYGMG…LHWLHQGAEP (208 aa)). Cys-82 (nucleophile) is an active-site residue. Active-site residues include His-186 and Glu-188.

As to quaternary structure, heterodimer of HisH and HisF.

It is found in the cytoplasm. The enzyme catalyses 5-[(5-phospho-1-deoxy-D-ribulos-1-ylimino)methylamino]-1-(5-phospho-beta-D-ribosyl)imidazole-4-carboxamide + L-glutamine = D-erythro-1-(imidazol-4-yl)glycerol 3-phosphate + 5-amino-1-(5-phospho-beta-D-ribosyl)imidazole-4-carboxamide + L-glutamate + H(+). It carries out the reaction L-glutamine + H2O = L-glutamate + NH4(+). The protein operates within amino-acid biosynthesis; L-histidine biosynthesis; L-histidine from 5-phospho-alpha-D-ribose 1-diphosphate: step 5/9. Functionally, IGPS catalyzes the conversion of PRFAR and glutamine to IGP, AICAR and glutamate. The HisH subunit catalyzes the hydrolysis of glutamine to glutamate and ammonia as part of the synthesis of IGP and AICAR. The resulting ammonia molecule is channeled to the active site of HisF. This is Imidazole glycerol phosphate synthase subunit HisH from Synechococcus sp. (strain CC9902).